Reading from the N-terminus, the 197-residue chain is Ribosome biogenesis protein RLP24 (197 aa).

The interval 144 to 197 (QAERAAAGVDEDAEMGDSDEEMEDASEEESEEEEQQQQKIVLKNKKRSAKKIAF) is disordered. A compositionally biased stretch (acidic residues) spans 152–178 (VDEDAEMGDSDEEMEDASEEESEEEEQ). Residues 185–197 (LKNKKRSAKKIAF) are compositionally biased toward basic residues.

This sequence belongs to the eukaryotic ribosomal protein eL24 family. In terms of assembly, associated with nucleolar and cytoplasmic pre-60S particles. At the end of biogenesis it dissociates from cytoplasmic pre-60S particles and is likely to be exchanged for its ribosomal homolog, RPL24.

The protein resides in the cytoplasm. It localises to the nucleus. Involved in the biogenesis of the 60S ribosomal subunit. Ensures the docking of NOG1 to pre-60S particles. Activates and recruits ATPase AFG2 to cytoplasmic pre-60S ribosomal particles. The protein is Ribosome biogenesis protein RLP24 (RLP24) of Eremothecium gossypii (strain ATCC 10895 / CBS 109.51 / FGSC 9923 / NRRL Y-1056) (Yeast).